Reading from the N-terminus, the 333-residue chain is Transaldolase (333 aa).

Lys-135 functions as the Schiff-base intermediate with substrate in the catalytic mechanism.

The protein belongs to the transaldolase family. Type 1 subfamily. Homodimer.

Its subcellular location is the cytoplasm. The enzyme catalyses D-sedoheptulose 7-phosphate + D-glyceraldehyde 3-phosphate = D-erythrose 4-phosphate + beta-D-fructose 6-phosphate. It participates in carbohydrate degradation; pentose phosphate pathway; D-glyceraldehyde 3-phosphate and beta-D-fructose 6-phosphate from D-ribose 5-phosphate and D-xylulose 5-phosphate (non-oxidative stage): step 2/3. Transaldolase is important for the balance of metabolites in the pentose-phosphate pathway. The polypeptide is Transaldolase (Prochlorococcus marinus (strain MIT 9312)).